We begin with the raw amino-acid sequence, 373 residues long: 4-hydroxy-3-methylbut-2-en-1-yl diphosphate synthase (flavodoxin) (373 aa).

Cys-270, Cys-273, Cys-305, and Glu-312 together coordinate [4Fe-4S] cluster.

It belongs to the IspG family. It depends on [4Fe-4S] cluster as a cofactor.

It catalyses the reaction (2E)-4-hydroxy-3-methylbut-2-enyl diphosphate + oxidized [flavodoxin] + H2O + 2 H(+) = 2-C-methyl-D-erythritol 2,4-cyclic diphosphate + reduced [flavodoxin]. It functions in the pathway isoprenoid biosynthesis; isopentenyl diphosphate biosynthesis via DXP pathway; isopentenyl diphosphate from 1-deoxy-D-xylulose 5-phosphate: step 5/6. In terms of biological role, converts 2C-methyl-D-erythritol 2,4-cyclodiphosphate (ME-2,4cPP) into 1-hydroxy-2-methyl-2-(E)-butenyl 4-diphosphate. The protein is 4-hydroxy-3-methylbut-2-en-1-yl diphosphate synthase (flavodoxin) of Photorhabdus laumondii subsp. laumondii (strain DSM 15139 / CIP 105565 / TT01) (Photorhabdus luminescens subsp. laumondii).